Consider the following 1755-residue polypeptide: Transposon Ty1-LR3 Gag-Pol polyprotein (1755 aa).

The segment covering M1–S16 has biased composition (low complexity). Disordered stretches follow at residues M1–Q93, P126–P173, and G352–T421. Polar residues-rich tracts occupy residues T48–S60 and Q127–F152. The span at T153 to T165 shows a compositional bias: low complexity. An RNA-binding region spans residues N299–H401. Positions N402 to S418 are enriched in low complexity. Residue S416 is modified to Phosphoserine. The active-site For protease activity; shared with dimeric partner is the D461. Residues N583 to C640 form an integrase-type zinc finger-like region. The Integrase catalytic domain occupies N660–D829. Mg(2+) contacts are provided by D671 and D736. Disordered stretches follow at residues S956–K1087, R1092–P1111, and A1129–Y1172. Over residues S960–T969 the composition is skewed to low complexity. Positions S1005–T1015 are enriched in polar residues. A compositionally biased stretch (basic and acidic residues) spans E1038–D1052. Composition is skewed to polar residues over residues S1053–D1082 and P1101–P1111. Positions K1178–R1212 match the Bipartite nuclear localization signal motif. A Reverse transcriptase Ty1/copia-type domain is found at N1338–Q1476. Residues D1346, D1427, D1428, D1610, E1652, and D1685 each coordinate Mg(2+). The region spanning D1610–K1752 is the RNase H Ty1/copia-type domain.

As to quaternary structure, the capsid protein forms a homotrimer, from which the VLPs are assembled. The protease is a homodimer, whose active site consists of two apposed aspartic acid residues. In terms of processing, initially, virus-like particles (VLPs) are composed of the structural unprocessed proteins Gag and Gag-Pol, and also contain the host initiator methionine tRNA (tRNA(i)-Met) which serves as a primer for minus-strand DNA synthesis, and a dimer of genomic Ty RNA. Processing of the polyproteins occurs within the particle and proceeds by an ordered pathway, called maturation. First, the protease (PR) is released by autocatalytic cleavage of the Gag-Pol polyprotein yielding capsid protein p45 and a Pol-p154 precursor protein. This cleavage is a prerequisite for subsequent processing of Pol-p154 at the remaining sites to release the mature structural and catalytic proteins. Maturation takes place prior to the RT reaction and is required to produce transposition-competent VLPs.

The protein resides in the cytoplasm. It is found in the nucleus. It carries out the reaction DNA(n) + a 2'-deoxyribonucleoside 5'-triphosphate = DNA(n+1) + diphosphate. It catalyses the reaction Endonucleolytic cleavage to 5'-phosphomonoester.. Capsid protein (CA) is the structural component of the virus-like particle (VLP), forming the shell that encapsulates the retrotransposons dimeric RNA genome. The particles are assembled from trimer-clustered units and there are holes in the capsid shells that allow for the diffusion of macromolecules. CA also has nucleocapsid-like chaperone activity, promoting primer tRNA(i)-Met annealing to the multipartite primer-binding site (PBS), dimerization of Ty1 RNA and initiation of reverse transcription. Its function is as follows. The aspartyl protease (PR) mediates the proteolytic cleavages of the Gag and Gag-Pol polyproteins after assembly of the VLP. In terms of biological role, reverse transcriptase/ribonuclease H (RT) is a multifunctional enzyme that catalyzes the conversion of the retro-elements RNA genome into dsDNA within the VLP. The enzyme displays a DNA polymerase activity that can copy either DNA or RNA templates, and a ribonuclease H (RNase H) activity that cleaves the RNA strand of RNA-DNA heteroduplexes during plus-strand synthesis and hydrolyzes RNA primers. The conversion leads to a linear dsDNA copy of the retrotransposon that includes long terminal repeats (LTRs) at both ends. Functionally, integrase (IN) targets the VLP to the nucleus, where a subparticle preintegration complex (PIC) containing at least integrase and the newly synthesized dsDNA copy of the retrotransposon must transit the nuclear membrane. Once in the nucleus, integrase performs the integration of the dsDNA into the host genome. The sequence is that of Transposon Ty1-LR3 Gag-Pol polyprotein (TY1B-LR3) from Saccharomyces cerevisiae (strain ATCC 204508 / S288c) (Baker's yeast).